An 81-amino-acid polypeptide reads, in one-letter code: Short neurotoxin 1 (81 aa).

The N-terminal stretch at 1–21 is a signal peptide; the sequence is MKTLLLTLVVVTIVCLDLGYT. Disulfide bonds link Cys24/Cys43, Cys38/Cys60, Cys62/Cys73, and Cys74/Cys79.

It belongs to the three-finger toxin family. Short-chain subfamily. Type I alpha-neurotoxin sub-subfamily. As to expression, expressed by the venom gland.

It localises to the secreted. In terms of biological role, binds to muscle nicotinic acetylcholine receptor (nAChR) and inhibit acetylcholine from binding to the receptor, thereby impairing neuromuscular transmission. The chain is Short neurotoxin 1 from Cryptophis nigrescens (Eastern small-eyed snake).